The following is a 328-amino-acid chain: L-lactate dehydrogenase (328 aa).

Residues Val-18, Glu-39, Lys-46, Tyr-71, and 85-86 contribute to the NAD(+) site; that span reads GA. 2 residues coordinate substrate: Gln-88 and Arg-94. Residues Ser-107, 124–126, and Ser-149 each bind NAD(+); that span reads AAN. 126 to 129 provides a ligand contact to substrate; the sequence is NPVD. 154–157 is a substrate binding site; sequence DTAR. Beta-D-fructose 1,6-bisphosphate contacts are provided by Arg-159 and His-174. The Proton acceptor role is filled by His-181. Tyr-226 carries the post-translational modification Phosphotyrosine. Thr-235 contacts substrate.

The protein belongs to the LDH/MDH superfamily. LDH family. Homotetramer.

The protein resides in the cytoplasm. It carries out the reaction (S)-lactate + NAD(+) = pyruvate + NADH + H(+). The protein operates within fermentation; pyruvate fermentation to lactate; (S)-lactate from pyruvate: step 1/1. Allosterically activated by fructose 1,6-bisphosphate (FBP). Functionally, catalyzes the conversion of lactate to pyruvate. In Streptococcus mutans serotype c (strain ATCC 700610 / UA159), this protein is L-lactate dehydrogenase.